Here is a 1024-residue protein sequence, read N- to C-terminus: Multidrug resistance protein MdtC (1024 aa).

Transmembrane regions (helical) follow at residues 12–32 (VATT…FSLL), 333–353 (EVER…FLFL), 360–380 (LIPA…MYLC), 387–407 (LSLM…IVVL), 431–451 (VGFT…PLLL), 463–483 (FAVT…TLTP), 528–548 (WVMV…ISIP), 853–873 (LWLI…LYES), 875–895 (VHPL…LLAL), 897–917 (LFDA…IGIV), 953–973 (PILM…ISSG), and 984–1004 (ITIV…TPVV).

The protein belongs to the resistance-nodulation-cell division (RND) (TC 2.A.6) family. MdtC subfamily. As to quaternary structure, part of a tripartite efflux system composed of MdtA, MdtB and MdtC. MdtC forms a heteromultimer with MdtB.

The protein resides in the cell inner membrane. The chain is Multidrug resistance protein MdtC from Yersinia enterocolitica serotype O:8 / biotype 1B (strain NCTC 13174 / 8081).